The primary structure comprises 276 residues: MVKGPGLYSDIGKKARDLLYRDYVSDHKFTVTTYSTTGVAITASGLKKGELFLADVSTQLKNKNITTDVKVDTNSNVYTTITVDEPAPGLKTIFSFVVPDQKSGKVELQYLHEYAGINTSIGLTASPLVNFSGVAGNNTVALGTDLSFDTATGNFTKCNAGLSFSSSDLIASLALNDKGDTVSASYYHTVKPVTNTAVGAELTHSFSSNENTLTIGTQHLLDPLTTVKARVNSYGKASALIQHEWRPKSLFTISGEVDTRAIEKSAKIGLAVALKP.

Belongs to the eukaryotic mitochondrial porin (TC 1.B.8.1) family.

The protein localises to the mitochondrion outer membrane. In terms of biological role, forms a channel through the cell membrane that allows diffusion of small hydrophilic molecules. The channel adopts an open conformation at low or zero membrane potential and a closed conformation at potentials above 30-40 mV. The open state has a weak anion selectivity whereas the closed state is cation-selective. This chain is Mitochondrial outer membrane protein porin of 36 kDa, found in Solanum tuberosum (Potato).